A 402-amino-acid chain; its full sequence is Imidazolonepropionase (402 aa).

Fe(3+)-binding residues include His-66 and His-68. Zn(2+) contacts are provided by His-66 and His-68. 4-imidazolone-5-propanoate is bound by residues Arg-75, Tyr-138, and His-171. Position 138 (Tyr-138) interacts with N-formimidoyl-L-glutamate. Residue His-236 coordinates Fe(3+). Zn(2+) is bound at residue His-236. Gln-239 contributes to the 4-imidazolone-5-propanoate binding site. Position 311 (Asp-311) interacts with Fe(3+). Asp-311 serves as a coordination point for Zn(2+). Residues Asn-313 and Gly-315 each contribute to the N-formimidoyl-L-glutamate site. Thr-316 lines the 4-imidazolone-5-propanoate pocket.

The protein belongs to the metallo-dependent hydrolases superfamily. HutI family. The cofactor is Zn(2+). It depends on Fe(3+) as a cofactor.

It localises to the cytoplasm. The catalysed reaction is 4-imidazolone-5-propanoate + H2O = N-formimidoyl-L-glutamate. The protein operates within amino-acid degradation; L-histidine degradation into L-glutamate; N-formimidoyl-L-glutamate from L-histidine: step 3/3. Functionally, catalyzes the hydrolytic cleavage of the carbon-nitrogen bond in imidazolone-5-propanoate to yield N-formimidoyl-L-glutamate. It is the third step in the universal histidine degradation pathway. In Pseudomonas aeruginosa (strain ATCC 15692 / DSM 22644 / CIP 104116 / JCM 14847 / LMG 12228 / 1C / PRS 101 / PAO1), this protein is Imidazolonepropionase.